A 78-amino-acid chain; its full sequence is DNA gyrase inhibitor YacG (78 aa).

Cysteine 7, cysteine 10, cysteine 26, and cysteine 30 together coordinate Zn(2+).

This sequence belongs to the DNA gyrase inhibitor YacG family. As to quaternary structure, interacts with GyrB. The cofactor is Zn(2+).

In terms of biological role, inhibits all the catalytic activities of DNA gyrase by preventing its interaction with DNA. Acts by binding directly to the C-terminal domain of GyrB, which probably disrupts DNA binding by the gyrase. In Colwellia psychrerythraea (strain 34H / ATCC BAA-681) (Vibrio psychroerythus), this protein is DNA gyrase inhibitor YacG.